The primary structure comprises 146 residues: Ferredoxin-thioredoxin reductase catalytic chain, chloroplastic (146 aa).

A chloroplast-targeting transit peptide spans 1 to 26 (MMSMASTTASPFCPSPMPRGRKCTVR). Cysteine 85 is a [4Fe-4S] cluster binding site. Residue cysteine 87 is the Nucleophile of the active site. A disulfide bridge connects residues cysteine 87 and cysteine 117. [4Fe-4S] cluster is bound by residues cysteine 104, cysteine 106, and cysteine 115.

This sequence belongs to the ferredoxin thioredoxin reductase beta subunit family. In terms of assembly, heterodimer of subunit A (variable subunit) and subunit B (catalytic subunit). Heterodimeric FTR forms a complex with ferredoxin and thioredoxin. The cofactor is [4Fe-4S] cluster.

Its subcellular location is the plastid. It is found in the chloroplast. It carries out the reaction [thioredoxin]-disulfide + 2 reduced [2Fe-2S]-[ferredoxin] + 2 H(+) = [thioredoxin]-dithiol + 2 oxidized [2Fe-2S]-[ferredoxin]. Its function is as follows. Catalytic subunit of the ferredoxin-thioredoxin reductase (FTR), which catalyzes the two-electron reduction of thioredoxins by the electrons provided by reduced ferredoxin. The polypeptide is Ferredoxin-thioredoxin reductase catalytic chain, chloroplastic (Oryza sativa subsp. japonica (Rice)).